Here is a 342-residue protein sequence, read N- to C-terminus: ATP synthase subunit a (342 aa).

Helical transmembrane passes span 11-31 (GLIK…AFAS), 109-129 (HVVT…IIGS), 170-190 (YLPY…LGLV), 199-219 (NINV…IAAL), 238-258 (ALWI…PVAL), 262-282 (LFAN…ISFI), 287-307 (IVAV…EIFV), and 308-328 (AFLQ…LASA).

This sequence belongs to the ATPase A chain family. F-type ATPases have 2 components, CF(1) - the catalytic core - and CF(0) - the membrane proton channel. CF(1) has five subunits: alpha(3), beta(3), gamma(1), delta(1), epsilon(1). CF(0) has four main subunits: a, b, b' and c.

It localises to the cell inner membrane. Key component of the proton channel; it plays a direct role in the translocation of protons across the membrane. The chain is ATP synthase subunit a from Chlorobium phaeobacteroides (strain DSM 266 / SMG 266 / 2430).